The sequence spans 153 residues: Probable disulfide formation protein (153 aa).

The helical transmembrane segment at 4 to 23 (DTRLYLAWLVALAATLGSLY) threads the bilayer. Cysteine 33 and cysteine 36 are oxidised to a cystine. 2 helical membrane-spanning segments follow: residues 38–57 (AQRI…AFVG) and 64–81 (YVLP…FQNL). Cysteines 93 and 101 form a disulfide. The helical transmembrane segment at 117 to 139 (RALTIPVLSMIAFALILALLSWP) threads the bilayer.

Belongs to the DsbB family. BdbC subfamily.

Its subcellular location is the cell membrane. Required for disulfide bond formation in some proteins. This is Probable disulfide formation protein from Deinococcus radiodurans (strain ATCC 13939 / DSM 20539 / JCM 16871 / CCUG 27074 / LMG 4051 / NBRC 15346 / NCIMB 9279 / VKM B-1422 / R1).